A 329-amino-acid chain; its full sequence is Probable nicotianamine synthase 7 (329 aa).

The protein belongs to the nicotianamine synthase (NAS)-like family.

The catalysed reaction is 3 S-adenosyl-L-methionine = nicotianamine + 3 S-methyl-5'-thioadenosine + 3 H(+). Synthesizes nicotianamine, a polyamine that is the first intermediate in the synthesis of the phytosiderophores of the mugineic acid type found in gramineae which serves as a sensor for the physiological iron status within the plant, and/or might be involved in the transport of iron. In Hordeum vulgare (Barley), this protein is Probable nicotianamine synthase 7 (NAS7).